Reading from the N-terminus, the 197-residue chain is Probable proteasome subunit beta type-4 (197 aa).

Belongs to the peptidase T1B family. The 26S proteasome consists of a 20S proteasome core and two 19S regulatory subunits. The 20S proteasome core is composed of 28 subunits that are arranged in four stacked rings, resulting in a barrel-shaped structure. The two end rings are each formed by seven alpha subunits, and the two central rings are each formed by seven beta subunits. The catalytic chamber with the active sites is on the inside of the barrel.

The protein resides in the cytoplasm. It localises to the nucleus. Its function is as follows. Non-catalytic component of the proteasome which degrades poly-ubiquitinated proteins in the cytoplasm and in the nucleus. It is essential for the regulated turnover of proteins and for the removal of misfolded proteins. The proteasome is a multicatalytic proteinase complex that is characterized by its ability to cleave peptides with Arg, Phe, Tyr, Leu, and Glu adjacent to the leaving group at neutral or slightly basic pH. It has an ATP-dependent proteolytic activity. The protein is Probable proteasome subunit beta type-4 (PRE1) of Encephalitozoon cuniculi (strain GB-M1) (Microsporidian parasite).